A 492-amino-acid polypeptide reads, in one-letter code: MTNTLTSTFADLGLSEKRCQLLADIGFEAPTQIQTEAIPLLLSGRDMLAQSQTGTGKTAAFALPLMDRIDPEGDLQALILTPTRELAQQVAEAMKDFSHERRLFILNVYGGQSIERQIRSLERGVQIVVGTPGRVIDLIDRKKLKLETIQWVVLDEADEMLSMGFIDDVKTILRKTPPTRQTACFSATMPREIKELVNQFLNDPALVTVKQTQSTPTRIEQQLYHVPRGWSKAKALQPILEMEDPESAIIFVRTKQTAADLTSRLQEAGHSVDEYHGNLSQSQRERLVHRFRDGKIKLVVATDIAARGLDVNNLSHVVNFDLPDNAETYIHRIGRTGRAGKTGKAIALVEPIDRRLLRSIENRLKQQIEVCTIPNRSQVEAKRIEKLQEQLKEALTGERMASFLPLVRELSDEYDAQAIAAAALQMIYDQSCPHWMKSDWEVPEVDFNKPVLRRGRNAGGGQNKSGGGYQGKPGKPRRSSGGRRPAYSDRQQ.

The Q motif signature appears at 7 to 35 (STFADLGLSEKRCQLLADIGFEAPTQIQT). The region spanning 38 to 207 (IPLLLSGRDM…NQFLNDPALV (170 aa)) is the Helicase ATP-binding domain. Residue 51-58 (SQTGTGKT) participates in ATP binding. The short motif at 155–158 (DEAD) is the DEAD box element. Positions 234–379 (KALQPILEME…VCTIPNRSQV (146 aa)) constitute a Helicase C-terminal domain. The disordered stretch occupies residues 451 to 492 (VLRRGRNAGGGQNKSGGGYQGKPGKPRRSSGGRRPAYSDRQQ). The span at 457 to 471 (NAGGGQNKSGGGYQG) shows a compositional bias: gly residues.

It belongs to the DEAD box helicase family.

It is found in the cytoplasm. Its subcellular location is the cell inner membrane. It localises to the cellular thylakoid membrane. The catalysed reaction is ATP + H2O = ADP + phosphate + H(+). Helicase inhibited by the slowly-hydrolyzing ATP analog ATP-gamma-S. Protein is rapidly degraded upon shifting from 20 to 30 degrees Celsius, the degradation machinery is only transiently present in cells grown at 30 degrees Celsius, is inhibited by commercial protease inhibitors and requires full-length protein expression (the N-terminal fragment does not induce proteolysis although it can be degraded by wild-type extract). An ATP-dependent bidirectional RNA helicase with RNA-dependent ATPase activity; does not unwind dsDNA, uses only (d)ATP. Also has ATP-dependent RNA annealing activity; concurrent annealing and helicase activity promote strand-exchange activity. In vitro has low helicase processivity, annealing processivity is probably higher. Required for correct cold adaptation, probably by aiding translation of mRNAs required for photosynthesis and electron transport. Probably regulates the cold-shock-inducible expression of the GroESL chaperones. May partially regulate its own expression at both the transcriptional and post-transcriptional level (experiments used a construct expressing a 25 kDa trunacted protein which might have dominant-negative effects); is probably not directly involved in the pathway responsible for mRNA degradation. In Synechocystis sp. (strain ATCC 27184 / PCC 6803 / Kazusa), this protein is RNA helicase CrhR.